The following is a 599-amino-acid chain: Subtilisin-like protease 1 (599 aa).

The first 20 residues, 1–20 (MRTVFIYACIISLVLRTIPA), serve as a signal peptide directing secretion. Residues 21–195 (HNDLMSKEKE…VESDELVGAD (175 aa)) constitute a propeptide, inhibition peptide. An N-linked (GlcNAc...) asparagine glycan is attached at Asn-57. A coiled-coil region spans residues 74-101 (EDAPKEELNKIEMEKKKAEEEAKNSKKK). Ca(2+) is bound by residues Asn-123, Thr-126, Pro-128, and Gly-183. A glycan (N-linked (GlcNAc...) asparagine) is linked at Asn-227. Asp-251 lines the Ca(2+) pocket. The Peptidase S8 domain maps to 257–574 (QWGLDLARLD…GGYIDILNAV (318 aa)). Cystine bridges form between Cys-283-Cys-393 and Cys-372-Cys-389. Residue Asp-286 is the Charge relay system of the active site. The Ca(2+) site is built by Asp-295, Glu-306, Asp-314, Asp-315, Asp-316, Asn-318, Ile-320, Asp-322, and Asp-323. Asn-331 carries N-linked (GlcNAc...) asparagine glycosylation. Residue His-342 is the Charge relay system of the active site. Ile-353 serves as a coordination point for Ca(2+). An N-linked (GlcNAc...) asparagine glycan is attached at Asn-355. Ca(2+) is bound by residues Asn-356, Ile-358, and Val-360. 2 N-linked (GlcNAc...) asparagine glycosylation sites follow: Asn-402 and Asn-434. Cys-435 and Cys-448 are oxidised to a cystine. The active-site Charge relay system is the Ser-519.

Belongs to the peptidase S8 family. The N-terminal prodomain is cleaved.

The protein resides in the secreted. It is found in the parasitophorous vacuole lumen. Its subcellular location is the cytoplasmic vesicle. The protein localises to the secretory vesicle. It carries out the reaction Hydrolysis of proteins with broad specificity for peptide bonds, and a preference for a large uncharged residue in P1. Hydrolyzes peptide amides.. Functionally, mediates the proteolytic maturation of serine protease SERA3. Mediates the proteolytic maturation of MSP1, and thereby may prime the parasite cell surface for invasion of fresh erythrocytes. Required for completion of the parasite pre-erythrocytic stages. Required for hepatic schizont development and merozoite formation. Required for the egress of the hepatic merozoites from the parasitophorous vacuole. Required for parasite infectivity during blood stages. Required for male gamete egress. The sequence is that of Subtilisin-like protease 1 from Plasmodium berghei (strain Anka).